Consider the following 247-residue polypeptide: Cell division protein ZapD (247 aa).

This sequence belongs to the ZapD family. As to quaternary structure, interacts with FtsZ.

Its subcellular location is the cytoplasm. Its function is as follows. Cell division factor that enhances FtsZ-ring assembly. Directly interacts with FtsZ and promotes bundling of FtsZ protofilaments, with a reduction in FtsZ GTPase activity. This is Cell division protein ZapD from Shigella flexneri.